Reading from the N-terminus, the 297-residue chain is Small ribosomal subunit biogenesis GTPase RsgA (297 aa).

The 159-residue stretch at 65-223 folds into the CP-type G domain; that stretch reads TNEIGRPAVA…IADTPGFSAI (159 aa). GTP-binding positions include 114 to 117 and 166 to 174; these read SKAD and GQSGAGKST. Residues Cys-247, Cys-252, His-254, and Cys-260 each coordinate Zn(2+).

The protein belongs to the TRAFAC class YlqF/YawG GTPase family. RsgA subfamily. Monomer. Associates with 30S ribosomal subunit, binds 16S rRNA. The cofactor is Zn(2+).

The protein localises to the cytoplasm. In terms of biological role, one of several proteins that assist in the late maturation steps of the functional core of the 30S ribosomal subunit. Helps release RbfA from mature subunits. May play a role in the assembly of ribosomal proteins into the subunit. Circularly permuted GTPase that catalyzes slow GTP hydrolysis, GTPase activity is stimulated by the 30S ribosomal subunit. The polypeptide is Small ribosomal subunit biogenesis GTPase RsgA (Lactobacillus gasseri (strain ATCC 33323 / DSM 20243 / BCRC 14619 / CIP 102991 / JCM 1131 / KCTC 3163 / NCIMB 11718 / NCTC 13722 / AM63)).